The following is a 273-amino-acid chain: MMHSKKLTLGICLVLLIILIVGYVIMTKANGQNAQIKDTFNQTLKLYPTKNLDDFYDKEGFRDQEFKKGDKGTWIVNSGMNIQLKGGALKSREMVLYINRNTRTTKGYFIVGEITKDKKGYTHDKDKKGYTHDKDKKYPVKMEHNKIIPTKPIKDEKLKKEIENFKFFVQYGNFKDFKDYKNGDISYNPNVPSYSAKYQLSNDDYNIQQLRKRYDIPTKKAPELLLKGDGDLKGSSIGSKDLEFTFVQNKRENIYFTDSVEFTPSEDTSYESN.

A helical membrane pass occupies residues 7-27; that stretch reads LTLGICLVLLIILIVGYVIMT.

It belongs to the staphylococcal tandem lipoprotein family.

The protein localises to the cell membrane. This is an uncharacterized protein from Staphylococcus aureus (strain MSSA476).